The primary structure comprises 146 residues: Transcriptional regulator MraZ (146 aa).

SpoVT-AbrB domains are found at residues 5-48 (TSYH…TLEE) and 77-120 (ASEC…SRAK).

This sequence belongs to the MraZ family. Forms oligomers.

It is found in the cytoplasm. The protein resides in the nucleoid. The chain is Transcriptional regulator MraZ from Desulfosudis oleivorans (strain DSM 6200 / JCM 39069 / Hxd3) (Desulfococcus oleovorans).